Reading from the N-terminus, the 131-residue chain is L-aspartate semialdehyde sulfurtransferase iron-sulfur subunit (131 aa).

2 consecutive 4Fe-4S ferredoxin-type domains span residues 73–102 (KVIK…MDED) and 103–131 (YNVV…EIFE). Residues Cys82, Cys85, Cys88, Cys92, Cys112, Cys115, Cys118, and Cys122 each contribute to the [4Fe-4S] cluster site.

In terms of assembly, may form a complex with MJ0100. Requires [4Fe-4S] cluster as cofactor.

It functions in the pathway amino-acid biosynthesis. In terms of biological role, required for O-acetylhomoserine sulfhydrylase (OAHS)-independent homocysteine (Hcy) biosynthesis. Together with MJ0100, catalyzes the condensation of sulfide with aspartate semialdehyde to generate homocysteine. May be involved in the reduction of the disulfide formed in MJ0100. The chain is L-aspartate semialdehyde sulfurtransferase iron-sulfur subunit from Methanocaldococcus jannaschii (strain ATCC 43067 / DSM 2661 / JAL-1 / JCM 10045 / NBRC 100440) (Methanococcus jannaschii).